A 798-amino-acid polypeptide reads, in one-letter code: Type 2 DNA topoisomerase 6 subunit B (798 aa).

Residues Asn-60, Asp-91, 112 to 113, and 122 to 129 contribute to the ATP site; these read SR and GQQGIGIS. A compositionally biased stretch (basic and acidic residues) spans 221 to 233; sequence EPEDSFKSERATE. The interval 221–245 is disordered; it reads EPEDSFKSERATEELPPETEEIRPH. Lys-629 lines the ATP pocket.

It belongs to the TOP6B family. In terms of assembly, homodimer. Heterotetramer of two Top6A and two Top6B chains.

The enzyme catalyses ATP-dependent breakage, passage and rejoining of double-stranded DNA.. Its function is as follows. Relaxes both positive and negative superturns and exhibits a strong decatenase activity. In Natronomonas pharaonis (strain ATCC 35678 / DSM 2160 / CIP 103997 / JCM 8858 / NBRC 14720 / NCIMB 2260 / Gabara) (Halobacterium pharaonis), this protein is Type 2 DNA topoisomerase 6 subunit B.